The chain runs to 110 residues: Nucleoid-associated protein Mvan_5528 (110 aa).

This sequence belongs to the YbaB/EbfC family. Homodimer.

The protein resides in the cytoplasm. The protein localises to the nucleoid. Binds to DNA and alters its conformation. May be involved in regulation of gene expression, nucleoid organization and DNA protection. In Mycolicibacterium vanbaalenii (strain DSM 7251 / JCM 13017 / BCRC 16820 / KCTC 9966 / NRRL B-24157 / PYR-1) (Mycobacterium vanbaalenii), this protein is Nucleoid-associated protein Mvan_5528.